Reading from the N-terminus, the 251-residue chain is Triosephosphate isomerase (251 aa).

8–10 is a binding site for substrate; it reads NWK. His-97 acts as the Electrophile in catalysis. Catalysis depends on Glu-170, which acts as the Proton acceptor. Substrate-binding positions include Gly-176, Ser-215, and 236-237; that span reads GG.

It belongs to the triosephosphate isomerase family. Homodimer.

The protein localises to the cytoplasm. It catalyses the reaction D-glyceraldehyde 3-phosphate = dihydroxyacetone phosphate. It functions in the pathway carbohydrate biosynthesis; gluconeogenesis. It participates in carbohydrate degradation; glycolysis; D-glyceraldehyde 3-phosphate from glycerone phosphate: step 1/1. In terms of biological role, involved in the gluconeogenesis. Catalyzes stereospecifically the conversion of dihydroxyacetone phosphate (DHAP) to D-glyceraldehyde-3-phosphate (G3P). In Nitratidesulfovibrio vulgaris (strain ATCC 29579 / DSM 644 / CCUG 34227 / NCIMB 8303 / VKM B-1760 / Hildenborough) (Desulfovibrio vulgaris), this protein is Triosephosphate isomerase.